Consider the following 827-residue polypeptide: MEKEQEQGSVASSASVTIPSTTSVSTSTSAGTLSNSSSRQQTVPQISVYGGITDRQTVQVIQQALNRQPSTVAAQYLQQMYAAQQQHLMLQTAALQQQHLSLAAVQQASIVAGRQSCSQHGSTSQQTVASQTTINLATSPAARHLISRAQSGSSVPVCIGQQAVLLGNSSTPTLTASQAQMYLRAQMAQQTNLVQVARSLGRAVPLSSQLIFTPTASVTAIQPEAPAPSINTPPTSGQVQNLALRSQQGALTSTLSQSQLQSLSVKQSVASVTGQSVARLKGLGAEPSPQGTAAKASPAETSSETTAKNDKTSDLTTSVCPSVTSVAGHPFISTAYTQIQTHQLLQQHKQQFVIQQQPQILQRGQAQLLEAAAIHPHTVQAVAIQSALPAQPQQCPIPLLPKVPVTCQQATIFHSTTVSQQALAQNGQAHILTHTKAPPLQLTAVKCQIHPVQIQQGVASQNVPDKDTPVLLEPQLLSIPIQEPTRTELRQSDKESQVKENTQGSVNVKAGVGSPPAMTSGSGNNAPTVTGSAPQNGESKPPPQAVVKPQILTHVIEGFVIQEGAEPFPVERPSLLIENLKQKQHHAYSDLQKHNADSEMEDLSLQELNNQPEPVRTCEFCGNVDFAFNFKRSKRFCSTVCAKRYNVGCTKRMGLFPGKSSPEDTKKPKASDESPKNCSTETRKRNPSIQTTTGASLLSPHPSHPSHGESSQCSDMSSYEEPISPLSNSSFGAPIEHEESFDHSRELTPLLTQHFLASDPTKWNVEDVYEFICSLPGCHEIAEEFRSQEIDGQALMLLKEDHLMSTMNIKLGPALKIFARISMLKDS.

Disordered regions lie at residues 1 to 78 (MEKE…QYLQ), 282 to 316 (GLGA…SDLT), and 482 to 545 (QEPT…PPQA). The segment covering 9 to 38 (SVASSASVTIPSTTSVSTSTSAGTLSNSSS) has biased composition (low complexity). Over residues 485-498 (TRTELRQSDKESQV) the composition is skewed to basic and acidic residues. Polar residues predominate over residues 517-538 (AMTSGSGNNAPTVTGSAPQNGE). The short motif at 540–570 (KPPPQAVVKPQILTHVIEGFVIQEGAEPFPV) is the HD1 element. An FCS-type zinc finger spans residues 609–643 (NNQPEPVRTCEFCGNVDFAFNFKRSKRFCSTVCAK). Residues Cys-618, Cys-621, Cys-637, and Cys-641 each coordinate Zn(2+). The interval 653–730 (MGLFPGKSSP…EPISPLSNSS (78 aa)) is disordered. Over residues 661-675 (SPEDTKKPKASDESP) the composition is skewed to basic and acidic residues. Composition is skewed to polar residues over residues 687 to 696 (PSIQTTTGAS) and 708 to 717 (GESSQCSDMS). The SAM domain occupies 763 to 827 (WNVEDVYEFI…FARISMLKDS (65 aa)).

As to quaternary structure, component of a PRC1-like complex. Isoform 1 expression is stronger at the posterior border than in the anterior region within individual somites; On the contrary, isoform 2 expression is higher at the posterior border.

It localises to the nucleus. Its function is as follows. Component of a Polycomb group (PcG) multiprotein PRC1-like complex, a complex class required to maintain the transcriptionally repressive state of many genes, including Hox genes, throughout development. PcG PRC1 complex acts via chromatin remodeling and modification of histones; it mediates monoubiquitination of histone H2A 'Lys-119', rendering chromatin heritably changed in its expressibility. This is Polyhomeotic-like protein 2 (phc2) from Danio rerio (Zebrafish).